The sequence spans 461 residues: Cysteine--tRNA ligase (461 aa).

Zn(2+) is bound at residue C28. A 'HIGH' region motif is present at residues 30 to 40 (MTVYDYCHLGH). C212, H237, and E241 together coordinate Zn(2+). The short motif at 269–273 (KMSKS) is the 'KMSKS' region element. Position 272 (K272) interacts with ATP.

It belongs to the class-I aminoacyl-tRNA synthetase family. Monomer. Requires Zn(2+) as cofactor.

The protein resides in the cytoplasm. The catalysed reaction is tRNA(Cys) + L-cysteine + ATP = L-cysteinyl-tRNA(Cys) + AMP + diphosphate. In Aromatoleum aromaticum (strain DSM 19018 / LMG 30748 / EbN1) (Azoarcus sp. (strain EbN1)), this protein is Cysteine--tRNA ligase.